Consider the following 238-residue polypeptide: Metal-independent phosphoserine phosphatase (238 aa).

Residue His32 is the Tele-phosphohistidine intermediate of the active site. The active-site Proton donor/acceptor is Glu107.

It belongs to the phosphoglycerate mutase family.

The catalysed reaction is O-phospho-L-serine + H2O = L-serine + phosphate. It catalyses the reaction O-phospho-D-serine + H2O = D-serine + phosphate. Functionally, phosphoglycerate mutase-like protein lacking PGM activity, but having a low metal-independent phosphoserine phosphatase activity in vitro. May be involved in serine biosynthesis. This chain is Metal-independent phosphoserine phosphatase (IPSP), found in Arabidopsis thaliana (Mouse-ear cress).